The following is a 690-amino-acid chain: uncharacterized protein (690 aa).

This is an uncharacterized protein from Acanthamoeba polyphaga mimivirus (APMV).